A 248-amino-acid chain; its full sequence is HTH-type transcriptional regulator GgaR (248 aa).

The HTH gntR-type domain occupies 22-90 (TPLYIKFAET…RGYGTQINNI (69 aa)). A DNA-binding region (H-T-H motif) is located at residues 50–69 (ERDLSQLTGVSRITVRKAMQ).

With respect to regulation, senses ADP-glucose (ADPG), which is the substrate for glycogen elongation, as an effector. In the presence of ADPG, GgaR becomes inactive and derepresses the yegTUV operon, leading to glycogen accumulation. In contrast, in the absence of glucose, the concentration of ADPG decreases, GgaR becomes active, and glycogen accumulation is repressed. Functionally, transcriptional regulator that regulates glycogen accumulation in response to the amount of glucose available to the cell. Acts as a repressor of the yegTUV operon, which may be involved in glycogen accumulation. This is HTH-type transcriptional regulator GgaR from Escherichia coli O6:H1 (strain CFT073 / ATCC 700928 / UPEC).